The primary structure comprises 235 residues: Replication protein (235 aa).

Tyr-149 lines the DNA pocket.

This sequence belongs to the Gram-positive plasmids replication protein type 1 family.

Produces a single-strand nick in a specific site of the plasmid, and this nick results in single-strand replication by rolling circle mechanism. This Bacillus sp protein is Replication protein (repB).